Consider the following 282-residue polypeptide: 2-dehydro-3-deoxyphosphooctonate aldolase (282 aa).

Belongs to the KdsA family.

It localises to the cytoplasm. It carries out the reaction D-arabinose 5-phosphate + phosphoenolpyruvate + H2O = 3-deoxy-alpha-D-manno-2-octulosonate-8-phosphate + phosphate. The protein operates within carbohydrate biosynthesis; 3-deoxy-D-manno-octulosonate biosynthesis; 3-deoxy-D-manno-octulosonate from D-ribulose 5-phosphate: step 2/3. Its pathway is bacterial outer membrane biogenesis; lipopolysaccharide biosynthesis. The sequence is that of 2-dehydro-3-deoxyphosphooctonate aldolase from Granulibacter bethesdensis (strain ATCC BAA-1260 / CGDNIH1).